The primary structure comprises 364 residues: tRNA 2-selenouridine synthase (364 aa).

The 124-residue stretch at 14–137 (LIADTPIIDV…LRQTAIQATI (124 aa)) folds into the Rhodanese domain. The active-site S-selanylcysteine intermediate is the Cys97.

Belongs to the SelU family. Monomer.

It carries out the reaction 5-methylaminomethyl-2-thiouridine(34) in tRNA + selenophosphate + (2E)-geranyl diphosphate + H2O + H(+) = 5-methylaminomethyl-2-selenouridine(34) in tRNA + (2E)-thiogeraniol + phosphate + diphosphate. The enzyme catalyses 5-methylaminomethyl-2-thiouridine(34) in tRNA + (2E)-geranyl diphosphate = 5-methylaminomethyl-S-(2E)-geranyl-thiouridine(34) in tRNA + diphosphate. It catalyses the reaction 5-methylaminomethyl-S-(2E)-geranyl-thiouridine(34) in tRNA + selenophosphate + H(+) = 5-methylaminomethyl-2-(Se-phospho)selenouridine(34) in tRNA + (2E)-thiogeraniol. The catalysed reaction is 5-methylaminomethyl-2-(Se-phospho)selenouridine(34) in tRNA + H2O = 5-methylaminomethyl-2-selenouridine(34) in tRNA + phosphate. Functionally, involved in the post-transcriptional modification of the uridine at the wobble position (U34) of tRNA(Lys), tRNA(Glu) and tRNA(Gln). Catalyzes the conversion of 2-thiouridine (S2U-RNA) to 2-selenouridine (Se2U-RNA). Acts in a two-step process involving geranylation of 2-thiouridine (S2U) to S-geranyl-2-thiouridine (geS2U) and subsequent selenation of the latter derivative to 2-selenouridine (Se2U) in the tRNA chain. In Escherichia coli O6:K15:H31 (strain 536 / UPEC), this protein is tRNA 2-selenouridine synthase.